A 1254-amino-acid polypeptide reads, in one-letter code: MRIERRHTTTGQSPYAGIDFRLTTSEIRNPDGSVVFKLDNVEVPTEWSQVASDVLAQKYFRKAGVAARLKKVEEESVPSFLWRSVPDTEALSQLPEKERYVSELSAKQVFDRLAGCWTYWGWKGGYFTNDEDAQAFYDELRYMLAMQMVAPNSPQWFNTGLHWAYGIDGPGQGHYYVDPFTGKLTKSKSAYEHPQPHACFIQGVGDDLVNEGGIMDLWVREARLFKYGSGTGSNFSRLRGEGEKLSGGGRSSGLMSFLKIGDRAAGAIKSGGTTRRAAKMVVVDVDHPDIETYIDWKVKEEQKVAALVTGSKINQKHLKAVLKACVNCEGSGDDCFDPEKNPALRREIKLARRSLVPDNYIKRVIQFAKQGYKDIQFDVYDTDWDSEAYLTVSGQNSNNSVSLKDDFLRAVETDGDWNLNARTSKKVTKTLKARDLWEKIGYAAWASADPGLHFNTTMNDWHTCKASGDIRASNPCSEYMFLDDTACNLASANLLTFYNVATKHFDVEGYEHLCRLWTVVLEISVMMAQFPSKAIAELSYEFRTLGLGYANIGGLLMTMGLPYDSKEGRALCGALTAVMTGITYKTSAEIAAELGTFPGYKKNAAHMLRVIRNHRRAAHGQSNGYEALSVNPVPLDLVSCPQADLVSHAQAAWDAALELGEKHGYRNAQTTVIAPTGTIGLVMDCDTTGIEPDFALVKFKKLAGGGYFKIINRAVPAALRALGYRESEIAEIEAYAVGHGSLSNAPGINASTLKAKGFTDEAIAKVEKALPTAFDIKFAFNKWTFGEDFIRDQLGIGAEAIAAPGFDLLQAVGFTKREIEAANVHICGAMTVEGAPHLKAEHYPVFDCANPCGKIGKRYLSVESHIRMMAAAQPFISGAISKTINMPNDATVEDCKSAYMLSWKLALKANALYRDGSKLSQPLNSQLIADDEDEDDAVESLYEKPMAARTAQVSEKIVEKLVERIIVMREREKMPDRRKGYTQKAVVGGHKVYLRTGEYDDGRLGEIFIDMHKEGAALRSFINNFAIAVSLGLQYGVPLDEYVDAFTFTRFEPAGPVQGNDSIKYATSILDYVFRELAVSYMSRFDLAHVDPTESNFDALGKGVEEGKEPDEGHHASKLVSRGLTRSRTDNLVVMRGGSTAVAQGNDSAPSGGSKVTALASHGASARVGDVLEGAVALKQEVSHDLSPTEKLEALQWSKSGTAQTLVPSKAERRAEAKAKGYEGEMCSECGNFTLVRNGTCMKCDTCGSTTGCS.

Substrate is bound by residues serine 153, 198-199 (AC), glycine 230, 474-478 (NPCSE), and 675-679 (PTGTI). An intrachain disulfide couples cysteine 199 to cysteine 487. Residue asparagine 474 is the Proton acceptor of the active site. The active-site Cysteine radical intermediate is the cysteine 476. Glutamate 478 acts as the Proton acceptor in catalysis.

The protein belongs to the ribonucleoside diphosphate reductase class-2 family. Requires adenosylcob(III)alamin as cofactor.

The enzyme catalyses a 2'-deoxyribonucleoside 5'-diphosphate + [thioredoxin]-disulfide + H2O = a ribonucleoside 5'-diphosphate + [thioredoxin]-dithiol. Catalyzes the reduction of ribonucleotides to deoxyribonucleotides. May function to provide a pool of deoxyribonucleotide precursors for DNA repair during oxygen limitation and/or for immediate growth after restoration of oxygen. The polypeptide is Vitamin B12-dependent ribonucleotide reductase (nrdJ) (Bradyrhizobium diazoefficiens (strain JCM 10833 / BCRC 13528 / IAM 13628 / NBRC 14792 / USDA 110)).